Consider the following 327-residue polypeptide: Peroxidase N (327 aa).

Positions 1 to 28 are cleaved as a signal peptide; it reads MKTQTKVMGGHVLLTVFTLCMLCSAVRA. Gln29 carries the post-translational modification Pyrrolidone carboxylic acid. Intrachain disulfides connect Cys39-Cys116, Cys72-Cys77, Cys122-Cys323, and Cys200-Cys232. Residue His70 is the Proton acceptor of the active site. Asp71, Val74, Gly76, Asp78, and Ser80 together coordinate Ca(2+). Asn155 carries an N-linked (GlcNAc...) asparagine glycan. Position 163 (Pro163) interacts with substrate. A glycan (N-linked (GlcNAc...) asparagine) is linked at Asn182. His193 provides a ligand contact to heme b. Thr194 contacts Ca(2+). 2 N-linked (GlcNAc...) asparagine glycosylation sites follow: Asn209 and Asn239. Asp245 provides a ligand contact to Ca(2+). A glycan (N-linked (GlcNAc...) asparagine) is linked at Asn247. Ca(2+) is bound by residues Ser248 and Asp253. N-linked (GlcNAc...) asparagine glycosylation is present at Asn281.

Belongs to the peroxidase family. Classical plant (class III) peroxidase subfamily. Ca(2+) serves as cofactor. Heme b is required as a cofactor.

Its subcellular location is the secreted. It carries out the reaction 2 a phenolic donor + H2O2 = 2 a phenolic radical donor + 2 H2O. Removal of H(2)O(2), oxidation of toxic reductants, biosynthesis and degradation of lignin, suberization, auxin catabolism, response to environmental stresses such as wounding, pathogen attack and oxidative stress. These functions might be dependent on each isozyme/isoform in each plant tissue. The polypeptide is Peroxidase N (HRPN) (Armoracia rusticana (Horseradish)).